We begin with the raw amino-acid sequence, 277 residues long: Short chain dehydrogenase penD (277 aa).

NADP(+)-binding residues include I28, D76, and N105. Active-site proton donor residues include S158 and S159. The NADP(+) site is built by Y173, K177, and T209. Residue Y173 is the Proton acceptor of the active site. The active-site Lowers pKa of active site Tyr is K177.

The protein belongs to the short-chain dehydrogenases/reductases (SDR) family.

It catalyses the reaction yaequinolone D + NADPH + H(+) = penigequinolone A + NADP(+) + H2O. It carries out the reaction yaequinolone D + NADPH + H(+) = penigequinolone B + NADP(+) + H2O. It functions in the pathway secondary metabolite biosynthesis. The protein operates within alkaloid biosynthesis. It participates in mycotoxin biosynthesis. Short chain dehydrogenase; part of the gene cluster that mediates the biosynthesis of penigequinolones, potent insecticidal alkaloids that contain a highly modified 10-carbon prenyl group. The first stage is catalyzed by the nonribosomal peptide synthetase penN that condenses anthranilic acid and O-methyl-L-tyrosine to produce 4'-methoxycyclopeptin. 4'-methoxycyclopeptin is then converted to 4'-methoxydehydrocyclopeptin by the ketoglutarate-dependent dioxygenase penM through dehydrogenation to form a double bond between C-alpha and C-beta of the O-methyltyrosine side chain. PenM also converts its first product methoxydehydrocyclopeptin to 4'-methoxycyclopenin. The following conversion of 4'methoxycyclopenin into 4'-methoxyviridicatin is catalyzed by the cyclopenase penL. 4'-methoxyviridicatin is the precursor of quinolone natural products, and is further converted to quinolinone B. The prenyltransferase penI then catalyzes the canonical Friedel-Crafts alkylation of quinolinone B with dimethylallyl cation to yield dimethylallyl quinolone, which is subjected to FAD-dependent dehydrogenation by the FAD-linked oxidoreductase penH to yield conjugated aryl diene. The delta(3') double bond then serves as the site of the second alkylation with DMAPP catalyzed by the prenyltransferase penG to yield a carbenium ion intermediate, which can be attacked by H(2)O to yield a styrenyl quinolone containing a C3'-hydroxyprenyl chain, or undergo cyclization to yield yaequinolones J1 and J2. The conversion of the styrenyl quinolone into the tetrahydrofuran-containing yaequinolone C is performed by the FAD-dependent monooxygenase penE and involves epoxidation of the terminal C7'-C8' olefin, followed by epoxide ring opening initiated by the C3' hydroxyl group. The predicted cysteine hydrolase penJ acts as an epoxide hydrolase that enhances the rate of the 5-exo-tet cyclization step, increasing the yield of yaequinolone C. PenF catalyzes the cationic rearrangement of the epoxide formed by penE (before ring opening to produce yaequinolone C) into yaequinolone D. Finally, the short-chain dehydrogenase/reductase (SDR)-like reductase penD, catalyzes both the dehydration of yaequinolone D and the reduction of the resulting oxonium to yield penigequinolone. This is Short chain dehydrogenase penD from Penicillium thymicola.